The chain runs to 163 residues: Mediator of RNA polymerase II transcription subunit 10 (163 aa).

The tract at residues 57 to 79 is disordered; the sequence is AAPDPSYVQSPPSRTGLSPADPP. A compositionally biased stretch (polar residues) spans 63–72; the sequence is YVQSPPSRTG.

This sequence belongs to the Mediator complex subunit 10 family. In terms of assembly, component of the Mediator complex.

The protein resides in the nucleus. Component of the Mediator complex, a coactivator involved in the regulated transcription of nearly all RNA polymerase II-dependent genes. Mediator functions as a bridge to convey information from gene-specific regulatory proteins to the basal RNA polymerase II transcription machinery. Mediator is recruited to promoters by direct interactions with regulatory proteins and serves as a scaffold for the assembly of a functional preinitiation complex with RNA polymerase II and the general transcription factors. In Coccidioides immitis (strain RS) (Valley fever fungus), this protein is Mediator of RNA polymerase II transcription subunit 10 (NUT2).